Reading from the N-terminus, the 558-residue chain is Delta-1-pyrroline-5-carboxylate dehydrogenase, mitochondrial (558 aa).

NAD(+)-binding positions include Ser198, Lys223, and 276-280 (GSTGV). The Proton acceptor role is filled by Glu306. Cys340 (nucleophile) is an active-site residue. NAD(+) is bound at residue Glu438.

This sequence belongs to the aldehyde dehydrogenase family.

The protein localises to the mitochondrion matrix. The catalysed reaction is L-glutamate 5-semialdehyde + NAD(+) + H2O = L-glutamate + NADH + 2 H(+). It participates in amino-acid degradation; L-proline degradation into L-glutamate; L-glutamate from L-proline: step 2/2. Its function is as follows. Irreversible conversion of delta-1-pyrroline-5-carboxylate (P5C), derived either from proline or ornithine, to glutamate. This is a necessary step in the pathway interconnecting the urea and tricarboxylic acid cycles. The sequence is that of Delta-1-pyrroline-5-carboxylate dehydrogenase, mitochondrial from Dictyostelium discoideum (Social amoeba).